A 307-amino-acid chain; its full sequence is F-box protein At2g23160 (307 aa).

An F-box domain is found at N2 to T49.

In Arabidopsis thaliana (Mouse-ear cress), this protein is F-box protein At2g23160.